The following is a 207-amino-acid chain: Uridine kinase (207 aa).

G14 to T21 contacts ATP.

The protein belongs to the uridine kinase family.

It localises to the cytoplasm. The catalysed reaction is uridine + ATP = UMP + ADP + H(+). The enzyme catalyses cytidine + ATP = CMP + ADP + H(+). The protein operates within pyrimidine metabolism; CTP biosynthesis via salvage pathway; CTP from cytidine: step 1/3. It functions in the pathway pyrimidine metabolism; UMP biosynthesis via salvage pathway; UMP from uridine: step 1/1. The protein is Uridine kinase of Deinococcus deserti (strain DSM 17065 / CIP 109153 / LMG 22923 / VCD115).